A 323-amino-acid chain; its full sequence is Putative dTDP-D-glucose 4,6-dehydratase (323 aa).

Threonine 124 serves as a coordination point for substrate. Aspartate 125 functions as the Proton donor in the catalytic mechanism. Residues glutamate 126 and tyrosine 149 each act as proton acceptor in the active site.

Belongs to the NAD(P)-dependent epimerase/dehydratase family. dTDP-glucose dehydratase subfamily. The cofactor is NAD(+).

The catalysed reaction is dTDP-alpha-D-glucose = dTDP-4-dehydro-6-deoxy-alpha-D-glucose + H2O. This Acanthamoeba polyphaga mimivirus (APMV) protein is Putative dTDP-D-glucose 4,6-dehydratase.